Here is a 323-residue protein sequence, read N- to C-terminus: tRNA dimethylallyltransferase (323 aa).

13 to 20 (GPTASGKT) contributes to the ATP binding site. Residue 15–20 (TASGKT) participates in substrate binding. Interaction with substrate tRNA stretches follow at residues 42 to 45 (DSAL), 166 to 170 (QRIQR), 251 to 256 (RCVGYR), and 284 to 291 (KRQITWLR).

The protein belongs to the IPP transferase family. As to quaternary structure, monomer. Mg(2+) is required as a cofactor.

It catalyses the reaction adenosine(37) in tRNA + dimethylallyl diphosphate = N(6)-dimethylallyladenosine(37) in tRNA + diphosphate. Catalyzes the transfer of a dimethylallyl group onto the adenine at position 37 in tRNAs that read codons beginning with uridine, leading to the formation of N6-(dimethylallyl)adenosine (i(6)A). The chain is tRNA dimethylallyltransferase from Acidovorax sp. (strain JS42).